A 120-amino-acid chain; its full sequence is Large ribosomal subunit protein uL18 (120 aa).

It belongs to the universal ribosomal protein uL18 family. As to quaternary structure, part of the 50S ribosomal subunit; part of the 5S rRNA/L5/L18/L25 subcomplex. Contacts the 5S and 23S rRNAs.

This is one of the proteins that bind and probably mediate the attachment of the 5S RNA into the large ribosomal subunit, where it forms part of the central protuberance. This chain is Large ribosomal subunit protein uL18, found in Acidiphilium cryptum (strain JF-5).